A 226-amino-acid chain; its full sequence is ATP synthase subunit a (226 aa).

A run of 6 helical transmembrane segments spans residues 18 to 38 (FITG…SLGA), 76 to 96 (YFPL…IGII), 105 to 125 (SWSF…FEGI), 134 to 154 (FAHF…IEII), 179 to 199 (LIML…VLFF), and 201 to 221 (GILQ…GAVL).

Belongs to the ATPase A chain family. As to quaternary structure, F-type ATPases have 2 components, CF(1) - the catalytic core - and CF(0) - the membrane proton channel. CF(1) has five subunits: alpha(3), beta(3), gamma(1), delta(1), epsilon(1). CF(0) has three main subunits: a(1), b(2) and c(9-12). The alpha and beta chains form an alternating ring which encloses part of the gamma chain. CF(1) is attached to CF(0) by a central stalk formed by the gamma and epsilon chains, while a peripheral stalk is formed by the delta and b chains.

Its subcellular location is the cell inner membrane. Its function is as follows. Key component of the proton channel; it plays a direct role in the translocation of protons across the membrane. The sequence is that of ATP synthase subunit a from Helicobacter acinonychis (strain Sheeba).